The sequence spans 331 residues: Phosphoenolpyruvate transferase (331 aa).

D63 contacts 7,8-didemethyl-8-hydroxy-5-deazariboflavin.

Belongs to the CofD family. In terms of assembly, homodimer. Mg(2+) serves as cofactor.

It carries out the reaction enolpyruvoyl-2-diphospho-5'-guanosine + 7,8-didemethyl-8-hydroxy-5-deazariboflavin = dehydro coenzyme F420-0 + GMP + H(+). It functions in the pathway cofactor biosynthesis; coenzyme F420 biosynthesis. Its function is as follows. Catalyzes the transfer of the phosphoenolpyruvate moiety from enoylpyruvoyl-2-diphospho-5'-guanosine (EPPG) to 7,8-didemethyl-8-hydroxy-5-deazariboflavin (FO) with the formation of dehydro coenzyme F420-0 and GMP. In Mycobacterium sp. (strain KMS), this protein is Phosphoenolpyruvate transferase.